The sequence spans 209 residues: MLTVALPKGRIAQETLEIFETLFGDGFAFDDRKLILETPKFRFLLVRNQDVATYVFHQAADIGVVGLDTLEEQGLDVIRLLDLKRGICKVAIGMKKGEKFDLNKPEIKVASKMVNITKRYFEERAVSVDIIKLYGSIELAPLIGLADMIVDVVETGSTMKQNGLEVVEDIMTSSTYLIANKNSYIAKKDEVLDIYEKIKSVIDAEQKIK.

It belongs to the ATP phosphoribosyltransferase family. Short subfamily. As to quaternary structure, heteromultimer composed of HisG and HisZ subunits.

It localises to the cytoplasm. The enzyme catalyses 1-(5-phospho-beta-D-ribosyl)-ATP + diphosphate = 5-phospho-alpha-D-ribose 1-diphosphate + ATP. It functions in the pathway amino-acid biosynthesis; L-histidine biosynthesis; L-histidine from 5-phospho-alpha-D-ribose 1-diphosphate: step 1/9. Catalyzes the condensation of ATP and 5-phosphoribose 1-diphosphate to form N'-(5'-phosphoribosyl)-ATP (PR-ATP). Has a crucial role in the pathway because the rate of histidine biosynthesis seems to be controlled primarily by regulation of HisG enzymatic activity. This Sulfurimonas denitrificans (strain ATCC 33889 / DSM 1251) (Thiomicrospira denitrificans (strain ATCC 33889 / DSM 1251)) protein is ATP phosphoribosyltransferase.